The sequence spans 508 residues: Phenylacetaldehyde synthase (508 aa).

His203 and His318 together coordinate L-phenylalanine. Position 319 is an N6-(pyridoxal phosphate)lysine (Lys319). Phe348 contributes to the L-phenylalanine binding site.

Belongs to the group II decarboxylase family. In terms of assembly, homotetramer. Requires pyridoxal 5'-phosphate as cofactor.

It carries out the reaction L-phenylalanine + O2 + H2O + H(+) = 2-phenylacetaldehyde + H2O2 + NH4(+) + CO2. Its function is as follows. Bifunctional enzyme that catalyzes the decarboxylation of L-phenylalanine to produce 2-phenylethylamine, which is then oxidized to form 2-phenylacetaldehyde, a constituent of floral scent in petals. 2-phenylacetaldehyde is a precursor of 2-phenylethanol, another constituent of floral scent in petals. This Rosa hybrid cultivar protein is Phenylacetaldehyde synthase.